The chain runs to 83 residues: Probable calcium-binding protein CML29 (83 aa).

2 EF-hand domains span residues threonine 5–valine 40 and aspartate 43–leucine 75. Residues aspartate 18, asparagine 20, aspartate 22, lysine 24, glutamate 29, aspartate 53, aspartate 55, aspartate 57, asparagine 59, and glutamate 64 each coordinate Ca(2+).

Potential calcium sensor. This is Probable calcium-binding protein CML29 (CML29) from Arabidopsis thaliana (Mouse-ear cress).